A 157-amino-acid polypeptide reads, in one-letter code: MLSQHTQARIEQLAATLGLYIYDIDFFKEDNRPILRVSITRKAPMQKQDCKNGLAVSLQDCQNVSELISPLLDVEDENLKDYNLEVSSPGLERVLKKPQHYIYSLGEKVSIKLMDKSVIEGILHDVNENVSISIDTGKEILSFSFADMKKIKVVFEL.

Belongs to the RimP family.

Its subcellular location is the cytoplasm. Required for maturation of 30S ribosomal subunits. This Helicobacter hepaticus (strain ATCC 51449 / 3B1) protein is Ribosome maturation factor RimP.